We begin with the raw amino-acid sequence, 983 residues long: MTQTPVDYKQTVRTPKTDFPMRANASTREVEIQRFWEEQGIYGRLAQENPGEIFILHDGPPYANGELHVGHALNKILKDIINRYQLLQGRRVRYVPGWDCHGLPIELKVLQDLSQAERSQLTPLDVRTRARDFAQRTVQSQCASYKRFGVWGDWDHPYLTLQPEYEAAQLGVFGKMALKGYIYRGLKPVHWSPSSQTALAEAELEYPTKDDGSPAHTSRSVYVKFPLISIAAPETATVMAAELLPRLSAFHDREEELIDALLGERDDLPEIAVAIWTTTPWTLPGNLAVALNGELDYALVASDEHGLLIVAAELVERLAGTLATRFETIATFRGRELEGSLLAHPLFRRTSPIVLGDHVTTESGTGAVHTAPGHGSEDFELAQRYNLGVLSPVDDYGRFTREADSDRRENLPVFAGKAVLSDGNQAVIEALSAAGALLKEEAYVHKYPYDWRTKKPTIFRATTQWFASVSDFRPQALSAIAQTEWIPASGENRITAMVAGRNDWCISRQRAWGLPIPAFYCENCANVLLTQESVEAVQAAVRVHGSDIWWQKEASELLPPGIACAHCGGTAFRKEKDIMDVWFDSGSSWAGVLGRRPELHYPADVYLEGSDQHRGWFQSSLLTCVATEGTAPYKTVITHGFTLDEHGRKMSKSLGNVVDPKLVIDGGANQKQHPAYGADVLRLWVASVDYTSDQLVGPSVLAQIAEVYRKIRNTARYLLGSLNDFVPERDLVAFDSLGEVDQYLLHRLSVVHLEVTQAFESYQFSRFFQTIQNFCVADLSNFYLDISKDRLYISAEVSLRRRSCQTVLYRVLESLTRLIAPVLPHLAEDIWQHLPYPRSDASVFEAGWPVDHSQWFQPLTVDRWPGLIVLRDRVNIALEAARNAKRIGSSLEAKIRLHVEDPALTDELARQKDELRYLFIVSQVELLDELPAEVSVEEGAAVIVLDADGQKCERCWNYSVHVGEDAEHPTLCERCVSALAGAF.

Residues 61 to 71 (PYANGELHVGH) carry the 'HIGH' region motif. Residue glutamate 608 participates in L-isoleucyl-5'-AMP binding. The 'KMSKS' region motif lies at 649–653 (KMSKS). Lysine 652 is an ATP binding site. Zn(2+) contacts are provided by cysteine 952, cysteine 955, cysteine 972, and cysteine 975.

The protein belongs to the class-I aminoacyl-tRNA synthetase family. IleS type 1 subfamily. Monomer. The cofactor is Zn(2+).

It localises to the cytoplasm. The enzyme catalyses tRNA(Ile) + L-isoleucine + ATP = L-isoleucyl-tRNA(Ile) + AMP + diphosphate. Functionally, catalyzes the attachment of isoleucine to tRNA(Ile). As IleRS can inadvertently accommodate and process structurally similar amino acids such as valine, to avoid such errors it has two additional distinct tRNA(Ile)-dependent editing activities. One activity is designated as 'pretransfer' editing and involves the hydrolysis of activated Val-AMP. The other activity is designated 'posttransfer' editing and involves deacylation of mischarged Val-tRNA(Ile). The sequence is that of Isoleucine--tRNA ligase from Gloeobacter violaceus (strain ATCC 29082 / PCC 7421).